Consider the following 419-residue polypeptide: LanC-like protein 3 homolog (419 aa).

Belongs to the LanC-like protein family.

In Drosophila melanogaster (Fruit fly), this protein is LanC-like protein 3 homolog.